The chain runs to 61 residues: Small ribosomal subunit protein uS14 (61 aa).

Positions 24, 27, 40, and 43 each coordinate Zn(2+).

Belongs to the universal ribosomal protein uS14 family. Zinc-binding uS14 subfamily. In terms of assembly, part of the 30S ribosomal subunit. Contacts proteins S3 and S10. Zn(2+) is required as a cofactor.

In terms of biological role, binds 16S rRNA, required for the assembly of 30S particles and may also be responsible for determining the conformation of the 16S rRNA at the A site. The chain is Small ribosomal subunit protein uS14 from Mesomycoplasma hyopneumoniae (strain 232) (Mycoplasma hyopneumoniae).